The sequence spans 360 residues: Pyrimidine monooxygenase RutA (360 aa).

FMN is bound by residues 49–50 (IK), Asn-115, Glu-124, 140–141 (RY), and Ser-190.

The protein belongs to the NtaA/SnaA/DszA monooxygenase family. RutA subfamily.

It catalyses the reaction uracil + FMNH2 + NADH + O2 = (Z)-3-ureidoacrylate + FMN + NAD(+) + H2O + H(+). It carries out the reaction thymine + FMNH2 + NADH + O2 = (Z)-2-methylureidoacrylate + FMN + NAD(+) + H2O + H(+). Its function is as follows. Catalyzes the pyrimidine ring opening between N-3 and C-4 by an unusual flavin hydroperoxide-catalyzed mechanism, adding oxygen atoms in the process to yield ureidoacrylate peracid, that immediately reacts with FMN forming ureidoacrylate and FMN-N(5)-oxide. The FMN-N(5)-oxide reacts spontaneously with NADH to produce FMN. Requires the flavin reductase RutF to regenerate FMN in vivo. The chain is Pyrimidine monooxygenase RutA from Stutzerimonas stutzeri (strain A1501) (Pseudomonas stutzeri).